A 354-amino-acid chain; its full sequence is Guanine nucleotide-binding protein G(i) subunit alpha (354 aa).

Residue Gly2 is the site of N-myristoyl glycine attachment. A lipid anchor (S-palmitoyl cysteine) is attached at Cys3. One can recognise a G-alpha domain in the interval 32 to 354 (REVKLLLLGA…KNNLKDCGLF (323 aa)). The G1 motif stretch occupies residues 35–48 (KLLLLGAGESGKST). GTP contacts are provided by residues 40 to 47 (GAGESGKS), 175 to 181 (LRTRVKT), 200 to 204 (DVGGQ), 269 to 272 (NKKD), and Ala326. Mg(2+) is bound by residues Ser47 and Thr181. The interval 173-181 (DVLRTRVKT) is G2 motif. The segment at 196–205 (FKMFDVGGQR) is G3 motif. The tract at residues 265-272 (ILFLNKKD) is G4 motif. The segment at 324-329 (TCATDT) is G5 motif.

It belongs to the G-alpha family. G(i/o/t/z) subfamily. G proteins are composed of 3 units; alpha, beta and gamma. The alpha chain contains the guanine nucleotide binding site.

Guanine nucleotide-binding proteins (G proteins) are involved as modulators or transducers in various transmembrane signaling systems. The polypeptide is Guanine nucleotide-binding protein G(i) subunit alpha (Planorbella trivolvis (Marsh rams-horn)).